The following is a 172-amino-acid chain: Translation initiation factor IF-3 (172 aa).

This sequence belongs to the IF-3 family. Monomer.

The protein resides in the cytoplasm. Its function is as follows. IF-3 binds to the 30S ribosomal subunit and shifts the equilibrium between 70S ribosomes and their 50S and 30S subunits in favor of the free subunits, thus enhancing the availability of 30S subunits on which protein synthesis initiation begins. The polypeptide is Translation initiation factor IF-3 (Campylobacter jejuni subsp. doylei (strain ATCC BAA-1458 / RM4099 / 269.97)).